A 491-amino-acid polypeptide reads, in one-letter code: UDP-N-acetylmuramate--L-alanine ligase (491 aa).

Residue 126–132 (GTHGKTT) coordinates ATP.

The protein belongs to the MurCDEF family.

It localises to the cytoplasm. The catalysed reaction is UDP-N-acetyl-alpha-D-muramate + L-alanine + ATP = UDP-N-acetyl-alpha-D-muramoyl-L-alanine + ADP + phosphate + H(+). It participates in cell wall biogenesis; peptidoglycan biosynthesis. Its function is as follows. Cell wall formation. The sequence is that of UDP-N-acetylmuramate--L-alanine ligase from Enterobacter sp. (strain 638).